A 125-amino-acid polypeptide reads, in one-letter code: Protein ApaG (125 aa).

One can recognise an ApaG domain in the interval 1–125 (MINSPRVCIQ…FRLAVPTLIH (125 aa)).

This is Protein ApaG from Citrobacter koseri (strain ATCC BAA-895 / CDC 4225-83 / SGSC4696).